A 564-amino-acid polypeptide reads, in one-letter code: Dihydroxy-acid dehydratase (564 aa).

Residues 1-10 (MTDTRTKRRM) show a composition bias toward basic residues. The disordered stretch occupies residues 1 to 23 (MTDTRTKRRMNWNSHHITQGDER). A [2Fe-2S] cluster-binding site is contributed by Cys-57. Residue Asp-89 participates in Mg(2+) binding. Position 130 (Cys-130) interacts with [2Fe-2S] cluster. Mg(2+) contacts are provided by Asp-131 and Lys-132. Lys-132 carries the N6-carboxylysine modification. Cys-202 serves as a coordination point for [2Fe-2S] cluster. Glu-454 contacts Mg(2+). Ser-480 acts as the Proton acceptor in catalysis.

Belongs to the IlvD/Edd family. As to quaternary structure, homodimer. It depends on [2Fe-2S] cluster as a cofactor. The cofactor is Mg(2+).

The catalysed reaction is (2R)-2,3-dihydroxy-3-methylbutanoate = 3-methyl-2-oxobutanoate + H2O. The enzyme catalyses (2R,3R)-2,3-dihydroxy-3-methylpentanoate = (S)-3-methyl-2-oxopentanoate + H2O. Its pathway is amino-acid biosynthesis; L-isoleucine biosynthesis; L-isoleucine from 2-oxobutanoate: step 3/4. It functions in the pathway amino-acid biosynthesis; L-valine biosynthesis; L-valine from pyruvate: step 3/4. In terms of biological role, functions in the biosynthesis of branched-chain amino acids. Catalyzes the dehydration of (2R,3R)-2,3-dihydroxy-3-methylpentanoate (2,3-dihydroxy-3-methylvalerate) into 2-oxo-3-methylpentanoate (2-oxo-3-methylvalerate) and of (2R)-2,3-dihydroxy-3-methylbutanoate (2,3-dihydroxyisovalerate) into 2-oxo-3-methylbutanoate (2-oxoisovalerate), the penultimate precursor to L-isoleucine and L-valine, respectively. The protein is Dihydroxy-acid dehydratase of Deinococcus geothermalis (strain DSM 11300 / CIP 105573 / AG-3a).